A 430-amino-acid polypeptide reads, in one-letter code: MAARLLRGSLRFLGGHCAARPLPALRCSHSGGEERLETPSAKNLTDIGIRRIFSSEHDIFRKSIRKFFQEEVIPHHSEWEKAGEVSREVWEKAGKQGLLGVNIAEHLGGIGGDLYYAAVVWEEQAYSNCSGPGFSVHSGIVMSYITNYGSEEQIKHFIPQMTAGKCIGAIAMTELGAGSDLQGIKTNAKKDGSDWILNGSKVFISNGWLSDVVIVVAVTNHEAPSPARGISLFLVENGMKGFIKGRKLHKMGLKAQDTAELFFEDVRLPASALLGEENKGFYYIMKELPQERLLIADMAVSASEFMFEETRNYVKQRKAFGKTVAHLQTVQHKLAELKTHICVTRAFVDNCLQLHEAKRLDSATACMAKYWASELQNSVAYDCVQLHGGWGYMWEYPIAKAYVDARVQPIYGGTNEIMKELIAREIVFDK.

The N-terminal 30 residues, 1–30, are a transit peptide targeting the mitochondrion; sequence MAARLLRGSLRFLGGHCAARPLPALRCSHS. At Lys-42 the chain carries N6-acetyllysine. Phosphoserine occurs at positions 54 and 55. An N6-acetyllysine; alternate mark is found at Lys-66 and Lys-81. An N6-succinyllysine; alternate mark is found at Lys-66 and Lys-81. An N6-acetyllysine mark is found at Lys-92 and Lys-95. An N6-succinyllysine modification is found at Lys-165. Residues 170-179 and 203-205 each bind FAD; these read IAMTELGAGS and FIS. Substrate is bound at residue Ser-179. 227-228 serves as a coordination point for substrate; sequence AR. Lys-240 is modified (N6-succinyllysine). Residues Lys-254 and Lys-279 each carry the N6-acetyllysine; alternate modification. An N6-succinyllysine; alternate mark is found at Lys-254 and Lys-279. Residues Tyr-282 and 289-292 contribute to the substrate site; that span reads PQER. Glu-291 acts as the Proton acceptor in catalysis. Arg-317 is an FAD binding site. Lys-318 is subject to N6-acetyllysine. Lys-322 bears the N6-acetyllysine; alternate mark. Lys-322 carries the N6-succinyllysine; alternate modification. Gln-328 is an FAD binding site. The residue at position 358 (Lys-358) is an N6-acetyllysine. Position 362 is a phosphoserine (Ser-362). FAD is bound at residue 385–389; that stretch reads QLHGG. 412–413 provides a ligand contact to substrate; that stretch reads GG. 414-416 lines the FAD pocket; it reads TNE.

The protein belongs to the acyl-CoA dehydrogenase family. In terms of assembly, homotetramer. FAD serves as cofactor. Post-translationally, acetylation at Lys-318 and Lys-322 in proximity of the cofactor-binding sites strongly reduces catalytic activity. These sites are deacetylated by SIRT3.

Its subcellular location is the mitochondrion matrix. It catalyses the reaction a long-chain 2,3-saturated fatty acyl-CoA + oxidized [electron-transfer flavoprotein] + H(+) = a long-chain (2E)-enoyl-CoA + reduced [electron-transfer flavoprotein]. The catalysed reaction is hexanoyl-CoA + oxidized [electron-transfer flavoprotein] + H(+) = (2E)-hexenoyl-CoA + reduced [electron-transfer flavoprotein]. It carries out the reaction octanoyl-CoA + oxidized [electron-transfer flavoprotein] + H(+) = (2E)-octenoyl-CoA + reduced [electron-transfer flavoprotein]. The enzyme catalyses decanoyl-CoA + oxidized [electron-transfer flavoprotein] + H(+) = (2E)-decenoyl-CoA + reduced [electron-transfer flavoprotein]. It catalyses the reaction dodecanoyl-CoA + oxidized [electron-transfer flavoprotein] + H(+) = (2E)-dodecenoyl-CoA + reduced [electron-transfer flavoprotein]. The catalysed reaction is tetradecanoyl-CoA + oxidized [electron-transfer flavoprotein] + H(+) = (2E)-tetradecenoyl-CoA + reduced [electron-transfer flavoprotein]. It carries out the reaction oxidized [electron-transfer flavoprotein] + hexadecanoyl-CoA + H(+) = (2E)-hexadecenoyl-CoA + reduced [electron-transfer flavoprotein]. The enzyme catalyses octadecanoyl-CoA + oxidized [electron-transfer flavoprotein] + H(+) = (2E)-octadecenoyl-CoA + reduced [electron-transfer flavoprotein]. It catalyses the reaction eicosanoyl-CoA + oxidized [electron-transfer flavoprotein] + H(+) = (2E)-eicosenoyl-CoA + reduced [electron-transfer flavoprotein]. The catalysed reaction is docosanoyl-CoA + oxidized [electron-transfer flavoprotein] + H(+) = (2E)-docosenoyl-CoA + reduced [electron-transfer flavoprotein]. It carries out the reaction tetracosanoyl-CoA + oxidized [electron-transfer flavoprotein] + H(+) = (2E)-tetracosenoyl-CoA + reduced [electron-transfer flavoprotein]. The enzyme catalyses (5E)-tetradecenoyl-CoA + oxidized [electron-transfer flavoprotein] + H(+) = (2E,5E)-tetradecadienoyl-CoA + reduced [electron-transfer flavoprotein]. It catalyses the reaction (5Z)-tetradecenoyl-CoA + oxidized [electron-transfer flavoprotein] + H(+) = (2E,5Z)-tetradecadienoyl-CoA + reduced [electron-transfer flavoprotein]. The catalysed reaction is oxidized [electron-transfer flavoprotein] + (9Z)-octadecenoyl-CoA + H(+) = (2E,9Z)-octadecadienoyl-CoA + reduced [electron-transfer flavoprotein]. It participates in lipid metabolism; mitochondrial fatty acid beta-oxidation. In terms of biological role, long-chain specific acyl-CoA dehydrogenase is one of the acyl-CoA dehydrogenases that catalyze the first step of mitochondrial fatty acid beta-oxidation, an aerobic process breaking down fatty acids into acetyl-CoA and allowing the production of energy from fats. The first step of fatty acid beta-oxidation consists in the removal of one hydrogen from C-2 and C-3 of the straight-chain fatty acyl-CoA thioester, resulting in the formation of trans-2-enoyl-CoA. Among the different mitochondrial acyl-CoA dehydrogenases, long-chain specific acyl-CoA dehydrogenase can act on saturated and unsaturated acyl-CoAs with 6 to 24 carbons with a preference for 8 to 18 carbons long primary chains. This chain is Long-chain specific acyl-CoA dehydrogenase, mitochondrial, found in Macaca fascicularis (Crab-eating macaque).